A 417-amino-acid chain; its full sequence is Calreticulin (417 aa).

The first 17 residues, 1 to 17, serve as a signal peptide directing secretion; sequence MLLPVPLLLGLVGLAAA. The tract at residues 18 to 197 is N-domain; sequence EPTIYFKEQF…NSQVESGSLE (180 aa). Ca(2+) is bound by residues Gln-26, Lys-62, and Lys-64. Lys-64 bears the N6-(2-hydroxyisobutyryl)lysine mark. Tyr-109, Lys-111, Tyr-128, and Asp-135 together coordinate an alpha-D-glucoside. Cys-137 and Cys-163 are joined by a disulfide. An N6-acetyllysine modification is found at Lys-159. Residues 191–202 form a 1-1 repeat; the sequence is VESGSLEDDWDF. A 4 X approximate repeats region spans residues 191–255; it reads VESGSLEDDW…DAKKPEDWDE (65 aa). Residues 193–277 form a disordered region; the sequence is SGSLEDDWDF…NPEYKGEWKP (85 aa). The P-domain stretch occupies residues 198–308; sequence DDWDFLPPKK…YSPDSNIYAY (111 aa). A compositionally biased stretch (basic and acidic residues) spans 207–251; the sequence is KIKDPDAVKPEDWDERAKIDDPTDSKPEDWDKPEHIPDPDAKKPE. Lys-209 is modified (N6-acetyllysine). 6 tandem repeats follow at residues 210–221, 227–238, 244–255, 259–269, 273–283, and 287–297. The interaction with PPIB stretch occupies residues 237–270; that stretch reads DKPEHIPDPDAKKPEDWDEEMDGEWEPPVIQNPE. A compositionally biased stretch (acidic residues) spans 252–261; sequence DWDEEMDGEW. Positions 259 to 297 are 3 X approximate repeats; the sequence is GEWEPPVIQNPEYKGEWKPRQIDNPDYKGTWIHPEIDNP. The segment at 309-417 is C-domain; it reads ENFAVLGLDL…AAAGQAKDEL (109 aa). Asp-317 contacts an alpha-D-glucoside. Asp-328 provides a ligand contact to Ca(2+). The interval 350–417 is disordered; that stretch reads TKAAEKQMKD…AAAGQAKDEL (68 aa). Residues 352–379 are compositionally biased toward basic and acidic residues; that stretch reads AAEKQMKDKQDEEQRLKEEEEEKKRKEE. Acidic residues predominate over residues 380–408; it reads EEVDKEDEEDKDEDEEEEDEKEEEEEEDA. Positions 414–417 match the Prevents secretion from ER motif; sequence KDEL.

The protein belongs to the calreticulin family. Monomer. Component of an EIF2 complex at least composed of CELF1/CUGBP1, CALR, CALR3, EIF2S1, EIF2S2, HSP90B1 and HSPA5. Interacts with PDIA3/ERp57 and SPACA9. Interacts with TRIM21. Interacts with NR3C1. Interacts with PPIB. Interacts (via P-domain) with PDIA5. Interacts with CLCC1. As to expression, in blastocyst expressed in all blastomeres (at protein level). In embryos, expressed in spleen, kidney, liver, fat, muscle, ovary, granulosa cells and cumulus cells.

Its subcellular location is the endoplasmic reticulum lumen. The protein localises to the cytoplasm. It localises to the cytosol. The protein resides in the secreted. It is found in the extracellular space. Its subcellular location is the extracellular matrix. The protein localises to the cell surface. It localises to the sarcoplasmic reticulum lumen. The protein resides in the cytoplasmic vesicle. It is found in the secretory vesicle. Its subcellular location is the cortical granule. The protein localises to the cytolytic granule. Functionally, calcium-binding chaperone that promotes folding, oligomeric assembly and quality control in the endoplasmic reticulum (ER) via the calreticulin/calnexin cycle. This lectin interacts transiently with almost all of the monoglucosylated glycoproteins that are synthesized in the ER. Interacts with the DNA-binding domain of NR3C1 and mediates its nuclear export. Involved in maternal gene expression regulation. May participate in oocyte maturation via the regulation of calcium homeostasis. Present in the cortical granules of non-activated oocytes, is exocytosed during the cortical reaction in response to oocyte activation and might participate in the block to polyspermy. This is Calreticulin (CALR) from Sus scrofa (Pig).